The chain runs to 740 residues: Catalase-peroxidase (740 aa).

Residues 1-14 (MTENHDAIVTDAKS) show a composition bias toward basic and acidic residues. The tract at residues 1–21 (MTENHDAIVTDAKSEGSGGCP) is disordered. The segment at residues 108–231 (WHSAGTYRIS…LGAVQMGLIY (124 aa)) is a cross-link (tryptophyl-tyrosyl-methioninium (Trp-Tyr) (with M-257)). His-109 (proton acceptor) is an active-site residue. Residues 231-257 (YVNPEGPNGNPDPIAAARDIRETFRRM) constitute a cross-link (tryptophyl-tyrosyl-methioninium (Tyr-Met) (with W-108)). His-272 is a binding site for heme b.

It belongs to the peroxidase family. Peroxidase/catalase subfamily. As to quaternary structure, homodimer. It depends on heme b as a cofactor. Formation of the three residue Trp-Tyr-Met cross-link is important for the catalase, but not the peroxidase activity of the enzyme.

The catalysed reaction is H2O2 + AH2 = A + 2 H2O. It catalyses the reaction 2 H2O2 = O2 + 2 H2O. Bifunctional enzyme with both catalase and broad-spectrum peroxidase activity. This is Catalase-peroxidase from Streptomyces reticuli.